The sequence spans 638 residues: Chaperone protein HtpG (638 aa).

Residues 1–344 (MQKKETLEFQ…SNDLPLNVSR (344 aa)) form an a; substrate-binding region. A b region spans residues 345–560 (EILQNNENIY…ENDITTQMSK (216 aa)). The tract at residues 561-638 (LLISTGQESP…LLLSNIIRLN (78 aa)) is c.

This sequence belongs to the heat shock protein 90 family. Homodimer.

The protein localises to the cytoplasm. Molecular chaperone. Has ATPase activity. The sequence is that of Chaperone protein HtpG from Wigglesworthia glossinidia brevipalpis.